Here is a 183-residue protein sequence, read N- to C-terminus: MTYLSQIEALLFVAGEEGLSLRHLASMLSLTPTALQQQLEKLSQKYEKDQHSSLCLIETANTYRLVTKEGFAELLRAYAKTPMNQSLSRASLEVLSIVAYKQPITRIEIDDIRGVNSSGALSKLLAFDLIREAGKKDVVGRPHLYATTDYFLDYMGINHLDELIEVSAVEPADEEIALFRTQD.

Belongs to the ScpB family. In terms of assembly, homodimer. Homodimerization may be required to stabilize the binding of ScpA to the Smc head domains. Component of a cohesin-like complex composed of ScpA, ScpB and the Smc homodimer, in which ScpA and ScpB bind to the head domain of Smc. The presence of the three proteins is required for the association of the complex with DNA.

It is found in the cytoplasm. Its function is as follows. Participates in chromosomal partition during cell division. May act via the formation of a condensin-like complex containing Smc and ScpA that pull DNA away from mid-cell into both cell halves. The protein is Segregation and condensation protein B of Streptococcus pyogenes serotype M1.